A 224-amino-acid polypeptide reads, in one-letter code: Viral late gene transcription factor 3 (224 aa).

Residues 6–26 (CSGCRHNGIVSEQGYEYCIFC) fold into a zinc finger.

Belongs to the orthopoxvirus VLTF-3/OPG127 family. As to quaternary structure, interacts with the late transcription elongation factor VLTF-4/OPG110. Interacts with the late transcription factors VLTF-1/OPG093.

Functionally, acts with RNA polymerase to initiate transcription from late gene promoters. This chain is Viral late gene transcription factor 3 (OPG127), found in Vaccinia virus (strain Ankara) (VACV).